Reading from the N-terminus, the 201-residue chain is Guanylate kinase (201 aa).

The 180-residue stretch at 7 to 186 (GVLLVLSSPS…SVEEISSILN (180 aa)) folds into the Guanylate kinase-like domain. Residue 14–21 (SPSGAGKT) coordinates ATP.

Belongs to the guanylate kinase family.

The protein resides in the cytoplasm. It catalyses the reaction GMP + ATP = GDP + ADP. Its function is as follows. Essential for recycling GMP and indirectly, cGMP. This Wolbachia pipientis wMel protein is Guanylate kinase.